The chain runs to 158 residues: Transcription elongation factor GreA (158 aa).

Residues 53 to 73 (EQQGFIEGRIKEIEAKLSNAQ) adopt a coiled-coil conformation.

It belongs to the GreA/GreB family.

In terms of biological role, necessary for efficient RNA polymerase transcription elongation past template-encoded arresting sites. The arresting sites in DNA have the property of trapping a certain fraction of elongating RNA polymerases that pass through, resulting in locked ternary complexes. Cleavage of the nascent transcript by cleavage factors such as GreA or GreB allows the resumption of elongation from the new 3'terminus. GreA releases sequences of 2 to 3 nucleotides. This chain is Transcription elongation factor GreA, found in Thioalkalivibrio sulfidiphilus (strain HL-EbGR7).